The sequence spans 323 residues: Octaprenyl diphosphate synthase (323 aa).

Lys45, Arg48, and His77 together coordinate isopentenyl diphosphate. Positions 84 and 88 each coordinate Mg(2+). Arg93 is an an all-trans-polyprenyl diphosphate binding site. Position 94 (Arg94) interacts with isopentenyl diphosphate. An all-trans-polyprenyl diphosphate-binding residues include Lys170, Thr171, and Gln208.

This sequence belongs to the FPP/GGPP synthase family. It depends on Mg(2+) as a cofactor.

The catalysed reaction is 5 isopentenyl diphosphate + (2E,6E)-farnesyl diphosphate = all-trans-octaprenyl diphosphate + 5 diphosphate. In terms of biological role, supplies octaprenyl diphosphate, the precursor for the side chain of the isoprenoid quinones ubiquinone and menaquinone. This Escherichia coli (strain K12) protein is Octaprenyl diphosphate synthase (ispB).